The sequence spans 239 residues: Lytic polysaccharide monooxygenase-like protein X325 (239 aa).

The N-terminal stretch at 1-24 is a signal peptide; sequence MVLPSSVSQWAALIALLCAGLANA. A Cu(2+)-binding site is contributed by His25. N-linked (GlcNAc...) asparagine glycosylation is found at Asn41, Asn56, Asn79, Asn117, Asn150, and Asn197. 2 disulfides stabilise this stretch: Cys71–Cys176 and Cys141–Cys195. A lipid anchor (GPI-anchor amidated serine) is attached at Ser214. The propeptide at 215–239 is removed in mature form; the sequence is AAAPKSSLMSVLPVYMVALLSWAMM.

Belongs to the X325 family. Cu(2+) serves as cofactor.

Its subcellular location is the cell membrane. Lytic polysaccharide monooxygenase-like protein that has diverged to biological functions other than polysaccharide degradation since it does not perform oxidative cleavage of polysaccharides. Acts as a cell surface-bound protein that functions in the copper-accumulation pathway. May also act as the major cell wall sensor that regulates MAP kinase-dependent hyphal anastomosis, the fusion of hyphal cells. In Aspergillus fumigatus (strain ATCC MYA-4609 / CBS 101355 / FGSC A1100 / Af293) (Neosartorya fumigata), this protein is Lytic polysaccharide monooxygenase-like protein X325.